We begin with the raw amino-acid sequence, 148 residues long: Protein SOB FIVE-LIKE 1 (148 aa).

A compositionally biased stretch (basic and acidic residues) spans 1–10; the sequence is MESPRNHGGS. Disordered regions lie at residues 1–20 and 33–148; these read MESP…SCES and NDQS…SKTK. Positions 20–25 match the SOFL-A motif; it reads SGWTMY. Residues 54 to 76 are compositionally biased toward acidic residues; sequence DGYENDDGDTSDDGGDEESDDSM. The SOFL-B motif lies at 75 to 84; that stretch reads SMASDASSGP. Residues 91 to 101 are compositionally biased toward basic residues; the sequence is HINKHAARKNG. Residues 111–128 are compositionally biased toward basic and acidic residues; it reads QHTEKTISNEGEKSDLKA.

Belongs to the SOFL plant protein family. Predominantly expressed in the vascular tissues of seedlings, developing leaves, flowers and siliques, but barely detectable in roots and stems.

The protein localises to the cytoplasm. It localises to the nucleus. In terms of biological role, involved in cytokinin-mediated development. Together with SOFL2, triggers the endogenous content of specific bioactive cytokinins derived from the biosynthetic intermediates trans-zeatin riboside monophosphate (tZRMP) and N(6)-(Delta(2)-isopentenyl)adenosine monophosphate (iPRMP) such as N-glucosides trans-zeatin 7-glucoside (tZ7G), cis-zeatin 7-glucoside (cZ7G) and N(6)-(Delta(2)-isopentenyl)adenine 7-glucoside (iP7G). In Arabidopsis thaliana (Mouse-ear cress), this protein is Protein SOB FIVE-LIKE 1.